Here is a 628-residue protein sequence, read N- to C-terminus: Chaperone protein HtpG (628 aa).

The tract at residues 1-340 (MSTETLQKET…SADLPLNVSR (340 aa)) is a; substrate-binding. The interval 341–557 (EILQHSKDIE…EHDLSGNLER (217 aa)) is b. Residues 558-628 (LLKAAGQKTP…FVRRVNAMLA (71 aa)) form a c region.

It belongs to the heat shock protein 90 family. As to quaternary structure, homodimer.

The protein resides in the cytoplasm. In terms of biological role, molecular chaperone. Has ATPase activity. The protein is Chaperone protein HtpG of Methylobacillus flagellatus (strain ATCC 51484 / DSM 6875 / VKM B-1610 / KT).